We begin with the raw amino-acid sequence, 700 residues long: Putative glutamine-dependent NAD(+) synthetase (700 aa).

The CN hydrolase domain maps to 5 to 275 (VTIASCQLNQ…VEVISATVDV (271 aa)). Glutamate 45 functions as the Proton acceptor; for glutaminase activity in the catalytic mechanism. Lysine 114 (for glutaminase activity) is an active-site residue. Cysteine 175 serves as the catalytic Nucleophile; for glutaminase activity. The ligase stretch occupies residues 327–700 (IPLPEEEITF…ASKFEQHQRK (374 aa)). Residue 357–364 (PLSGGLDS) participates in ATP binding. Residue serine 359 is part of the active site.

The protein in the C-terminal section; belongs to the NAD synthetase family.

The catalysed reaction is deamido-NAD(+) + L-glutamine + ATP + H2O = L-glutamate + AMP + diphosphate + NAD(+) + H(+). Its pathway is cofactor biosynthesis; NAD(+) biosynthesis; NAD(+) from deamido-NAD(+) (L-Gln route): step 1/1. The chain is Putative glutamine-dependent NAD(+) synthetase from Schizosaccharomyces pombe (strain 972 / ATCC 24843) (Fission yeast).